Reading from the N-terminus, the 903-residue chain is MGISWFLSRFRIRTVAPSSFLKPRGLVYRPSQIRRRVSLLSLSGFHPYRAYSILGPKTPTAFNSANTVRFFSFSSISRLVFRSLRLPVAGFSLVAGGAAYIGAQVQRASDYTKDIFDKTFGILDSTWEKTRETVASVTNVQLPEISMPLWLEKILRLDEESAERRRVLQAERAKEHRSNSNDKQKSSDNDEDPNDTTVGIGAALAASILSVDSVDGEDTLTADEKRKLAQESKEDRMMLFTKKMIEIRNILQDIQDNNSAVTLPSIVVIGSQSSGKSSVLEAIVGHEFLPKGSNMVTRRPIELTLVHSADTAIPYGEFSGVQLGKITDFSKIQHILTDLNMAVPSSQGVDDNPIRLTIYASHIPNLSLIDLPGYIQIHSEDQPADLDMKISKLCEKYIREPNIILAVCAADVDLANSAALRASRRVDPLGLRTIGVVTKMDLVPPSKAISILHNNNYPLHYGYIGVISRIVPTGRFSAGQNLTDLVSTQENSYFSTHQQFADARIGNYLGIQSLRKCLINVLEYTMSKNLQHTADSIRTELEECNYQYKVQYNDRVLTADSYIAEGLDIFKAAFKEFTQKFGKSEVRDLLKSSLNEKVMDLLAERYWTDDDISNWSKHTNALDEHWKYKLDSCVSTLTRMGLGRVSTLLVTDSISKCIDEITKASPFADHPAAMQYIMNAAQDILRRRFHATSEQVENCVKPYKYDVEVNDDEWKSSRGQAEKLLQRELGLCQSALEKIKNAVGSRRMNQVLQYLEEQKTSSEPLPASYSTALLEQGRMLQYLKMREDILKLRISVLKSRACKHKEAKYTCPEIFLNAVSDKLVNTAVLFINIELLSEFYYQFPRELDQRLIHSLSSEQLNAFVNENPRLKSQLQLQHKRQCLELALQKINSLVILEQQADSD.

The transit peptide at 1-78 (MGISWFLSRF…RFFSFSSISR (78 aa)) directs the protein to the mitochondrion. The helical transmembrane segment at 86 to 103 (LPVAGFSLVAGGAAYIGA) threads the bilayer. Over residues 167 to 188 (VLQAERAKEHRSNSNDKQKSSD) the composition is skewed to basic and acidic residues. A disordered region spans residues 167 to 198 (VLQAERAKEHRSNSNDKQKSSDNDEDPNDTTV). Residues 198 to 214 (VGIGAALAASILSVDSV) traverse the membrane as a helical segment. A Dynamin-type G domain is found at 260–531 (AVTLPSIVVI…LEYTMSKNLQ (272 aa)). The G1 motif stretch occupies residues 270–277 (GSQSSGKS). Positions 273, 274, 275, 276, 277, 278, and 292 each coordinate GTP. Serine 277 is a Mg(2+) binding site. Residues 296–298 (VTR) form a G2 motif region. Positions 297 and 370 each coordinate Mg(2+). Residues 370–373 (DLPG) are G3 motif. A G4 motif region spans residues 438 to 441 (TKMD). Residues lysine 439, aspartate 441, and serine 468 each contribute to the GTP site. The interval 467–470 (ISRI) is G5 motif. Residues 691-805 (ATSEQVENCV…VLKSRACKHK (115 aa)) are paddle region. A disulfide bridge links cysteine 802 with cysteine 811. The 94-residue stretch at 805–898 (KEAKYTCPEI…KINSLVILEQ (94 aa)) folds into the GED domain.

It belongs to the TRAFAC class dynamin-like GTPase superfamily. Dynamin/Fzo/YdjA family. Homooligomer. Interacts with cdr1. Cleavage of the transit peptide by mitochondrial processing protease (MPP) produces a long integral membrane form of msp1 (l-msp1). Further processing by a rhomboid protease after the transmembrane regions produces a short peripheral membrane form of msp1 (s-msp1). Both isoforms are required for full activity.

It is found in the mitochondrion inner membrane. Its subcellular location is the mitochondrion intermembrane space. The catalysed reaction is GTP + H2O = GDP + phosphate + H(+). Its function is as follows. Dynamin-related GTPase that is essential for normal mitochondrial morphology by mediating fusion of the mitochondrial inner membranes and maintaining respiratory chain function. Exists in two forms: the transmembrane, long form (Dynamin-like GTPase msp1, long form; l-msp1), which is tethered to the inner mitochondrial membrane, and the short soluble form (Dynamin-like GTPase msp1, short form; s-msp1), which results from proteolytic cleavage and localizes in the intermembrane space. Both forms (l-msp1 and s-msp1) cooperate to catalyze the fusion of the mitochondrial inner membrane. Its role in mitochondrial morphology is required for mitochondrial genome maintenance. Constitutes the transmembrane long form (l-msp1) that plays a central role in mitochondrial inner membrane fusion. L-msp1 and the soluble short form (s-msp1) form higher-order helical assemblies that coordinate the fusion of mitochondrial inner membranes. Inner membrane-anchored l-msp1 molecules initiate membrane remodeling by recruiting soluble s-msp1 to rapidly polymerize into a flexible cylindrical scaffold encaging the mitochondrial inner membrane. Once at the membrane surface, the formation of s-msp1 helices induce bilayer curvature. Msp1 dimerization through the paddle region, which inserts into cardiolipin-containing membrane, promotes GTP hydrolysis and the helical assembly of a flexible msp1 lattice on the membrane, which drives membrane curvature and mitochondrial fusion. In terms of biological role, constitutes the soluble short form (s-msp1) generated by cleavage, which plays a central role in mitochondrial inner membrane fusion. The transmembrane long form (l-msp1) and the s-msp1 form higher-order helical assemblies that coordinate the fusion of mitochondrial inner membranes. Inner membrane-anchored l-msp1 molecules initiate membrane remodeling by recruiting soluble s-msp1 to rapidly polymerize into a flexible cylindrical scaffold encaging the mitochondrial inner membrane. Once at the membrane surface, the formation of s-msp1 helices induce bilayer curvature. Msp1 dimerization through the paddle region, which inserts into cardiolipin-containing membrane, promotes GTP hydrolysis and the helical assembly of a flexible msp1 lattice on the membrane, which drives membrane curvature and mitochondrial fusion. The chain is Dynamin-like GTPase msp1, mitochondrial from Schizosaccharomyces pombe (strain 972 / ATCC 24843) (Fission yeast).